A 662-amino-acid polypeptide reads, in one-letter code: Sodium/glucose cotransporter 1 (662 aa).

Over 1–24 the chain is Extracellular; it reads MDSSTLSPLTTSTAAPLESYERIR. The helical transmembrane segment at 25 to 47 threads the bilayer; it reads NAADISVIVIYFLVVMAVGLWAM. The Cytoplasmic portion of the chain corresponds to 48–66; the sequence is FSTNRGTVGGFFLAGRSMV. A helical membrane pass occupies residues 67–90; the sequence is WWPIGASLFASNIGSGHFVGLAGT. The Extracellular segment spans residues 91–95; sequence GAASG. A helical transmembrane segment spans residues 96–117; sequence IATGGFEWNALIMVVVLGWVFV. Topologically, residues 118 to 139 are cytoplasmic; it reads PIYIRAGVVTMPEYLQKRFGGK. Residues 140–169 form a helical membrane-spanning segment; it reads RIQIYLSILSLLLYIFTKISADIFSGAIFI. The Extracellular portion of the chain corresponds to 170 to 176; it reads QLTLGLD. Residues 177–193 form a helical membrane-spanning segment; sequence IYVAIIILLVITGLYTI. The Cytoplasmic segment spans residues 194–202; that stretch reads TGGLAAVIY. The chain crosses the membrane as a helical span at residues 203-221; it reads TDTLQTAIMMVGSVILTGF. Residues 222-275 lie on the Extracellular side of the membrane; sequence AFHEVGGYEAFTEKYMRAIPSQISYGNTSIPQKCYTPREDAFHIFRDAITGDIP. N-linked (GlcNAc...) asparagine glycosylation is present at Asn248. 5 disulfides stabilise this stretch: Cys255-Cys511, Cys255-Cys608, Cys345-Cys351, Cys355-Cys361, and Cys517-Cys522. The chain crosses the membrane as a helical span at residues 276 to 295; that stretch reads WPGLVFGMSILTLWYWCTDQ. Topologically, residues 296 to 309 are cytoplasmic; that stretch reads VIVQRCLSAKNLSH. A helical transmembrane segment spans residues 310–331; the sequence is VKAGCILCGYLKVMPMFLIVMM. At 332–375 the chain is on the extracellular side; it reads GMVSRILYTDKVACVVPSECERYCGTRVGCTNIAFPTLVVELMP. Residues 376–406 form a helical membrane-spanning segment; that stretch reads NGLRGLMLSVMMASLMSSLTSIFNSASTLFT. The Cytoplasmic segment spans residues 407–422; the sequence is MDIYTKIRKKASEKEL. A helical membrane pass occupies residues 423–444; the sequence is MIAGRLFMLFLIGISIAWVPIV. At 445-451 the chain is on the extracellular side; that stretch reads QSAQSGQ. Residues 452–477 form a helical membrane-spanning segment; that stretch reads LFDYIQSITSYLGPPIAAVFLLAIFW. Gln457 provides a ligand contact to D-glucose. At 478 to 481 the chain is on the cytoplasmic side; that stretch reads KRVN. A helical transmembrane segment spans residues 482–504; it reads EPGAFWGLVLGFLIGISRMITEF. The Extracellular segment spans residues 505-525; it reads AYGTGSCMEPSNCPTIICGVH. A helical transmembrane segment spans residues 526–547; that stretch reads YLYFAIILFVISIITVVVVSLF. Residues 548–642 lie on the Cytoplasmic side of the membrane; it reads TKPIPDVHLY…TSEHPLWRTV (95 aa). A helical membrane pass occupies residues 643–660; it reads VNINGVILLAVAVFCYAY. Over 661–662 the chain is Extracellular; the sequence is FA.

It belongs to the sodium:solute symporter (SSF) (TC 2.A.21) family. In terms of processing, N-glycosylation is not necessary for the cotransporter function. As to expression, found predominantly in intestine, renal cortex and in outer renal medulla.

Its subcellular location is the apical cell membrane. The catalysed reaction is D-glucose(out) + 2 Na(+)(out) = D-glucose(in) + 2 Na(+)(in). The enzyme catalyses D-galactose(out) + 2 Na(+)(out) = D-galactose(in) + 2 Na(+)(in). Enhanced by the interaction with PDZK1IP1/MAP17; but unlike SLC5A2/SGLT2, PDZK1IP1 is not essential for SLC5A1 transporter activity. Possibly modulated by cholesterol binding. Its function is as follows. Electrogenic Na(+)-coupled sugar symporter that actively transports D-glucose or D-galactose at the plasma membrane, with a Na(+) to sugar coupling ratio of 2:1. Transporter activity is driven by a transmembrane Na(+) electrochemical gradient set by the Na(+)/K(+) pump. Has a primary role in the transport of dietary monosaccharides from enterocytes to blood. Responsible for the absorption of D-glucose or D-galactose across the apical brush-border membrane of enterocytes, whereas basolateral exit is provided by GLUT2. Additionally, functions as a D-glucose sensor in enteroendocrine cells, triggering the secretion of the incretins GCG and GIP that control food intake and energy homeostasis. Together with SGLT2, functions in reabsorption of D-glucose from glomerular filtrate, playing a nonredundant role in the S3 segment of the proximal tubules. Transports D-glucose into endometrial epithelial cells, controlling glycogen synthesis and nutritional support for the embryo as well as the decidual transformation of endometrium prior to conception. Acts as a water channel enabling passive water transport in response to the osmotic gradient created upon sugar and Na(+) uptake. Has high water conductivity comparable to aquaporins and therefore is expected to play an important role in transepithelial water permeability, especially in the small intestine. In Oryctolagus cuniculus (Rabbit), this protein is Sodium/glucose cotransporter 1 (SLC5A1).